A 292-amino-acid polypeptide reads, in one-letter code: Elongation factor Ts (292 aa).

The segment at 79 to 82 is involved in Mg(2+) ion dislocation from EF-Tu; that stretch reads TDFV.

The protein belongs to the EF-Ts family.

The protein resides in the cytoplasm. In terms of biological role, associates with the EF-Tu.GDP complex and induces the exchange of GDP to GTP. It remains bound to the aminoacyl-tRNA.EF-Tu.GTP complex up to the GTP hydrolysis stage on the ribosome. The polypeptide is Elongation factor Ts (Xanthomonas campestris pv. campestris (strain B100)).